A 291-amino-acid chain; its full sequence is Nucleotide-binding protein Ccel_2290 (291 aa).

An ATP-binding site is contributed by 8-15 (GMSGAGKS). Position 59 to 62 (59 to 62 (DIRG)) interacts with GTP.

This sequence belongs to the RapZ-like family.

Functionally, displays ATPase and GTPase activities. This Ruminiclostridium cellulolyticum (strain ATCC 35319 / DSM 5812 / JCM 6584 / H10) (Clostridium cellulolyticum) protein is Nucleotide-binding protein Ccel_2290.